The sequence spans 262 residues: Flap endonuclease Xni (262 aa).

Asp-105 lines the Mg(2+) pocket. In terms of domain architecture, 5'-3' exonuclease spans 164–251; sequence SQFLDLMALA…NINLKDFRAN (88 aa). Positions 172, 173, 181, 183, and 186 each coordinate K(+). An interaction with DNA region spans residues 185-190; that stretch reads GIGPKS.

The protein belongs to the Xni family. Requires Mg(2+) as cofactor. K(+) is required as a cofactor.

In terms of biological role, has flap endonuclease activity. During DNA replication, flap endonucleases cleave the 5'-overhanging flap structure that is generated by displacement synthesis when DNA polymerase encounters the 5'-end of a downstream Okazaki fragment. The chain is Flap endonuclease Xni from Shewanella sp. (strain W3-18-1).